Consider the following 265-residue polypeptide: Secreted RxLR effector protein 16 (265 aa).

A signal peptide spans M1–A19. The RxLR-dEER motif lies at R46–R61. Residues N170, N219, and N240 are each glycosylated (N-linked (GlcNAc...) asparagine).

This sequence belongs to the RxLR effector family. Post-translationally, N-glycosylated. The putative N-glycosylation site at position 240 is essential for cell death-inducing activity.

The protein localises to the secreted. It localises to the host nucleus. Functionally, effector that acts as an elicitor that induces cell death and promotes ROS accumulation in Nicotian benthamiana. RxLR16-triggered cell death is dependent on SGT1, HSP90 and RAR1, but independent of the somatic embryogenesis receptor-like kinase SERK3/BAK1, indicating that it acts independently of the detection of cell surface pattern recognition receptors. Enhances the expressional levels of defense-associated genes involved in the salicylic acid-, jasmonate acid-, and ethylene-mediated signal transduction, resulting in disease resistance. However, as some other Plasmopara viticola RxLR effectors including RxLR1, RxLR10, RxLR30 and RxLR25, can suppress defense responses and disease resistance induced by RxLR16, it may not trigger host cell death or immune responses during physiological infection under natural conditions. This chain is Secreted RxLR effector protein 16, found in Plasmopara viticola (Downy mildew of grapevine).